Consider the following 167-residue polypeptide: RNA pyrophosphohydrolase (167 aa).

Residues 8-158 form the Nudix hydrolase domain; it reads PYRTCVGMML…KRPVYERVVK (151 aa). The Nudix box motif lies at 47-68; that stretch reads GGVDPGEDTWEAAKRELYEETN.

The protein belongs to the Nudix hydrolase family. RppH subfamily. A divalent metal cation is required as a cofactor.

Its function is as follows. Accelerates the degradation of transcripts by removing pyrophosphate from the 5'-end of triphosphorylated RNA, leading to a more labile monophosphorylated state that can stimulate subsequent ribonuclease cleavage. This Rhodopseudomonas palustris (strain HaA2) protein is RNA pyrophosphohydrolase.